The sequence spans 176 residues: Lipoprotein signal peptidase (176 aa).

Helical transmembrane passes span 12 to 32, 67 to 87, and 94 to 114; these read WYWV…WVLT, WQKW…TIWL, and VWRL…NLID. Catalysis depends on residues D123 and D141. Residues 133 to 153 traverse the membrane as a helical segment; it reads HFAAFNIADSAICIGAGLIIL.

The protein belongs to the peptidase A8 family.

The protein localises to the cell inner membrane. It catalyses the reaction Release of signal peptides from bacterial membrane prolipoproteins. Hydrolyzes -Xaa-Yaa-Zaa-|-(S,diacylglyceryl)Cys-, in which Xaa is hydrophobic (preferably Leu), and Yaa (Ala or Ser) and Zaa (Gly or Ala) have small, neutral side chains.. Its pathway is protein modification; lipoprotein biosynthesis (signal peptide cleavage). Functionally, this protein specifically catalyzes the removal of signal peptides from prolipoproteins. The sequence is that of Lipoprotein signal peptidase from Shewanella sediminis (strain HAW-EB3).